We begin with the raw amino-acid sequence, 261 residues long: RING finger and CHY zinc finger domain-containing protein 1 (261 aa).

The CHY-type zinc-finger motif lies at 13 to 80 (LAQGPRGCEH…AQQTCEDCST (68 aa)). Cys20, His22, Cys33, Cys34, Cys40, Cys43, His44, His50, Cys62, Cys65, Cys75, Cys78, Cys87, Cys90, His101, Cys102, Cys105, Cys108, His118, Cys119, Cys122, Cys125, His134, and Cys136 together coordinate Zn(2+). The segment at 82-144 (FGEYYCSICH…KCIENVSRQN (63 aa)) adopts a CTCHY-type zinc-finger fold. The RING-type zinc-finger motif lies at 145–189 (CPICLEDIHTSRVVAHVLPCGHLLHRTCYEEMLKEGYRCPLCMHS).

As to quaternary structure, monomer and homodimer. Interacts with AR, MDM2, KAT5, PLAG1, PLAGL2, COPE, UBE2D2 and GORAB/NTKLBP1. Subject to ubiquitination and proteasomal degradation. Interaction with PLAGL2 or KAT5 enhances protein stability. Detected in testis, liver, kidney and heart.

The protein resides in the nucleus. It localises to the nucleus speckle. The protein localises to the cytoplasm. The enzyme catalyses S-ubiquitinyl-[E2 ubiquitin-conjugating enzyme]-L-cysteine + [acceptor protein]-L-lysine = [E2 ubiquitin-conjugating enzyme]-L-cysteine + N(6)-ubiquitinyl-[acceptor protein]-L-lysine.. The protein operates within protein modification; protein ubiquitination. Its function is as follows. E3 ubiquitin-protein ligase that mediates ubiquitination of target proteins, including p53/TP53, TP73, HDAC1 and CDKN1B. Mediates ubiquitination and degradation of p53/TP53; preferentially acts on tetrameric p53/TP53. Catalyzes monoubiquitinates the translesion DNA polymerase POLH. Involved in the ribosome-associated quality control (RQC) pathway, which mediates the extraction of incompletely synthesized nascent chains from stalled ribosomes: RCHY1 acts downstream of NEMF and recognizes CAT tails associated with stalled nascent chains, leading to their ubiquitination and degradation. This Mus musculus (Mouse) protein is RING finger and CHY zinc finger domain-containing protein 1 (Rchy1).